Reading from the N-terminus, the 214-residue chain is Protein FAM167A (214 aa).

2 disordered regions span residues 1–26 (MSVP…PDDH) and 59–108 (PFPR…LSTG). Residues 118–156 (EAIAWLRKELTEMRLQDQQLARQLMRLRGDINKLKIEHT) adopt a coiled-coil conformation.

The protein belongs to the FAM167 (SEC) family. In terms of tissue distribution, expressed in skin, including primary keratinocytes, spleen, kidney, leukocytes, testis, lung, small intestine and prostate.

In Homo sapiens (Human), this protein is Protein FAM167A (FAM167A).